Consider the following 292-residue polypeptide: Putative phosphatase MPN_381 (292 aa).

Asp-11 acts as the Nucleophile in catalysis. Residue Asp-11 coordinates Mg(2+). Leu-12 provides a ligand contact to phosphate. A Mg(2+)-binding site is contributed by Asp-13. Residues 60-61 (TG) and Lys-217 each bind phosphate. Mg(2+) is bound at residue Asp-242. Asn-245 serves as a coordination point for phosphate.

This sequence belongs to the HAD-like hydrolase superfamily. Cof family. The cofactor is Mg(2+).

The sequence is that of Putative phosphatase MPN_381 from Mycoplasma pneumoniae (strain ATCC 29342 / M129 / Subtype 1) (Mycoplasmoides pneumoniae).